The following is an 87-amino-acid chain: Beta-defensin 109C (87 aa).

An N-terminal signal peptide occupies residues 1–22 (MRLHLLLLILLLFSILLSPVRG). Intrachain disulfides connect Cys31–Cys59, Cys38–Cys53, and Cys43–Cys60.

Belongs to the beta-defensin family.

The protein localises to the secreted. Its function is as follows. Has antibacterial activity. The chain is Beta-defensin 109C (DEFB109C) from Homo sapiens (Human).